The sequence spans 149 residues: Transcriptional repressor NrdR (149 aa).

A zinc finger lies at 3-34 (CPFCSENDTKVIDSRLVADGHQVRRRRQCLAC). The ATP-cone domain maps to 49-139 (PKVIKSNGNR…VYRSFEDIRE (91 aa)).

Belongs to the NrdR family. Zn(2+) serves as cofactor.

In terms of biological role, negatively regulates transcription of bacterial ribonucleotide reductase nrd genes and operons by binding to NrdR-boxes. This is Transcriptional repressor NrdR from Vibrio vulnificus (strain YJ016).